Here is a 169-residue protein sequence, read N- to C-terminus: Peptide deformylase (169 aa).

Positions 91 and 133 each coordinate Fe cation. The active site involves glutamate 134. Histidine 137 lines the Fe cation pocket.

The protein belongs to the polypeptide deformylase family. Fe(2+) serves as cofactor.

It carries out the reaction N-terminal N-formyl-L-methionyl-[peptide] + H2O = N-terminal L-methionyl-[peptide] + formate. Removes the formyl group from the N-terminal Met of newly synthesized proteins. Requires at least a dipeptide for an efficient rate of reaction. N-terminal L-methionine is a prerequisite for activity but the enzyme has broad specificity at other positions. The protein is Peptide deformylase of Haemophilus influenzae (strain ATCC 51907 / DSM 11121 / KW20 / Rd).